Here is a 134-residue protein sequence, read N- to C-terminus: MGMLTEFKEFAMRGNVIDLAVGVVIGAAFGKIVTALVEKIIMPPLGLLIGKVDFSQLAWTLSPARIGPDGKEIPAVVIGYGDFINTLIQFVIVAFAIFIVVKAINRLSRKQEAAPAAPAEEVVLLREIRDSLKK.

2 consecutive transmembrane segments (helical) span residues 16–36 (VIDL…VTAL) and 81–101 (GDFI…FIVV).

It belongs to the MscL family. Homopentamer.

It is found in the cell inner membrane. Functionally, channel that opens in response to stretch forces in the membrane lipid bilayer. May participate in the regulation of osmotic pressure changes within the cell. The chain is Large-conductance mechanosensitive channel from Stenotrophomonas maltophilia (strain K279a).